Reading from the N-terminus, the 395-residue chain is Aurora kinase A (395 aa).

Positions 1–114 are disordered; it reads MDRCKENCVS…QASLQKTEDT (114 aa). Polar residues-rich tracts occupy residues 29–60 and 84–99; these read QIPS…SQAQ and RLNN…ASGN. Residues S40 and S50 each carry the phosphoserine modification. Residues 100–114 show a composition bias toward basic and acidic residues; it reads DSEKEQASLQKTEDT. One can recognise a Protein kinase domain in the interval 124-374; sequence FDIGRPLGKG…LAEVLEHPWI (251 aa). ATP-binding positions include K134, K153, and 201 to 204; that span reads LEYA. Catalysis depends on D247, which acts as the Proton acceptor. K249 participates in a covalent cross-link: Glycyl lysine isopeptide (Lys-Gly) (interchain with G-Cter in SUMO2). Residues 251 to 252 and D265 contribute to the ATP site; that span reads EN. An activation segment region spans residues 271 to 284; it reads HAPSSRRTTMCGTL. Residues T278 and T279 each carry the phosphothreonine modification. At S333 the chain carries Phosphoserine; by PKA and PAK. The segment covering 376–385 has biased composition (polar residues); the sequence is ANSSKPPTGH. The tract at residues 376–395 is disordered; that stretch reads ANSSKPPTGHTSKEPTSKSS. Positions 386 to 395 are enriched in basic and acidic residues; the sequence is TSKEPTSKSS.

Belongs to the protein kinase superfamily. Ser/Thr protein kinase family. Aurora subfamily. As to quaternary structure, part of a complex composed of NEDD9, AURKA and CTTN; within the complex NEDD9 acts as a scaffold protein and is required for complex formation. Identified in a complex with AUNIP and NIN. Interacts with CPEB1, JTB, TACC1, TPX2, PPP2CA, as well as with the protein phosphatase type 1 (PP1) isoforms PPP1CA, PPP1CB and PPP1CC. Also interacts with its substrates ARHGEF2, BORA, KIF2A, PARD3, and p53/TP53. Interaction with BORA promotes phosphorylation of PLK1. Interacts with GADD45A, competing with its oligomerization. Interacts with FBXL7 and CIMAP3. Interacts (via C-terminus) with AUNIP (via C-terminus). Interacts with SIRT2. Interacts with FRY; this interaction facilitates AURKA-mediated PLK1 phosphorylation. Interacts with MYCN; interaction is phospho-independent and triggers AURKA activation; AURKA competes with FBXW7 for binding to unphosphorylated MYCN but not for binding to phosphorylated MYCN. Interacts with HNRNPU. Interacts with AAAS. Interacts with KLHL18 and CUL3. Interacts with FOXP1. Interacts with HDAC6; AURKA-mediated phosphorylation of HDAC6 promotes deacetylation of alpha-tubulin. Activated by phosphorylation at Thr-279; this brings about a change in the conformation of the activation segment. Phosphorylation at Thr-279 varies during the cell cycle and is highest during M phase. Autophosphorylated at Thr-279 upon TPX2 binding. Thr-279 can be phosphorylated by several kinases, including PAK and PKA. Protein phosphatase type 1 (PP1) binds AURKA and inhibits its activity by dephosphorylating Thr-279 during mitosis. Phosphorylation at Ser-333 decreases the kinase activity. PPP2CA controls degradation by dephosphorylating Ser-52 at the end of mitosis. Post-translationally, ubiquitinated by the anaphase-promoting complex (APC), leading to its degradation by the proteasome. Ubiquitinated by CHFR, leading to its degradation by the proteasome. Ubiquitinated by the E3 ubiquitin-protein ligase complex SCF(FBXL7) during mitosis, leading to its degradation by the proteasome. Detected in embryonic neurons in dorsal root ganglia and brain cortex (at protein level). Highly expressed in testis, in about one third of the seminiferous tubules. Expression is restricted to specific spermatocytes nearing completion of prophase, with levels falling off on transition to elongated spermatids. Highly expressed in the ovary, expression in the oocyte starts around the transition to large growing follicle. Abundant expression is seen in the proliferating granulosa and thecal cells of the growing follicle, and in the young corpus luteum. Very weakly expressed in spleen and intestine.

It localises to the cytoplasm. The protein resides in the cytoskeleton. It is found in the microtubule organizing center. The protein localises to the centrosome. Its subcellular location is the spindle pole. It localises to the centriole. The protein resides in the cell projection. It is found in the neuron projection. The protein localises to the cilium. Its subcellular location is the cilium basal body. It localises to the basolateral cell membrane. It catalyses the reaction L-seryl-[protein] + ATP = O-phospho-L-seryl-[protein] + ADP + H(+). The enzyme catalyses L-threonyl-[protein] + ATP = O-phospho-L-threonyl-[protein] + ADP + H(+). Its activity is regulated as follows. Activation of CDK1, appears to be an upstream event of AURKA activation. Phosphatase inhibitor-2 (PPP1R2) and TPX2 act also as activators. Inactivated by the G2 checkpoint. Inhibited by GADD45A and p53/TP53, and through dephosphorylation by protein phosphatase type 1 (PP1). MLN8054 is also a potent and selective inhibitor. Activated during the early phase of cilia disassembly in the presence of CIMAP3. Inhibited by the small molecule inhibitor VX-680. Functionally, mitotic serine/threonine kinase that contributes to the regulation of cell cycle progression. Associates with the centrosome and the spindle microtubules during mitosis and plays a critical role in various mitotic events including the establishment of mitotic spindle, centrosome duplication, centrosome separation as well as maturation, chromosomal alignment, spindle assembly checkpoint, and cytokinesis. Required for normal spindle positioning during mitosis and for the localization of NUMA1 and DCTN1 to the cell cortex during metaphase. Required for initial activation of CDK1 at centrosomes. Phosphorylates numerous target proteins, including ARHGEF2, BORA, BRCA1, CDC25B, DLGP5, HDAC6, KIF2A, LATS2, NDEL1, PARD3, PPP1R2, PLK1, RASSF1, TACC3, p53/TP53 and TPX2. Phosphorylates MCRS1 which is required for MCRS1-mediated kinetochore fiber assembly and mitotic progression. Regulates KIF2A tubulin depolymerase activity. Required for normal axon formation. Plays a role in microtubule remodeling during neurite extension. Important for microtubule formation and/or stabilization. Also acts as a key regulatory component of the p53/TP53 pathway, and particularly the checkpoint-response pathways critical for oncogenic transformation of cells, by phosphorylating and destabilizing p53/TP53. Phosphorylates its own inhibitors, the protein phosphatase type 1 (PP1) isoforms, to inhibit their activity. Inhibits cilia outgrowth. Required for cilia disassembly via phosphorylation of HDAC6 and subsequent deacetylation of alpha-tubulin. Regulates protein levels of the anti-apoptosis protein BIRC5 by suppressing the expression of the SCF(FBXL7) E3 ubiquitin-protein ligase substrate adapter FBXL7 through the phosphorylation of the transcription factor FOXP1. This chain is Aurora kinase A (Aurka), found in Mus musculus (Mouse).